Consider the following 275-residue polypeptide: Large ribosomal subunit protein uL2 (275 aa).

2 disordered regions span residues glutamate 35–glycine 55 and valine 223–asparagine 260. Polar residues predominate over residues arginine 39 to valine 49.

Belongs to the universal ribosomal protein uL2 family. As to quaternary structure, part of the 50S ribosomal subunit. Forms a bridge to the 30S subunit in the 70S ribosome.

In terms of biological role, one of the primary rRNA binding proteins. Required for association of the 30S and 50S subunits to form the 70S ribosome, for tRNA binding and peptide bond formation. It has been suggested to have peptidyltransferase activity; this is somewhat controversial. Makes several contacts with the 16S rRNA in the 70S ribosome. The protein is Large ribosomal subunit protein uL2 of Methylococcus capsulatus (strain ATCC 33009 / NCIMB 11132 / Bath).